Reading from the N-terminus, the 340-residue chain is Putative transport protein AF_1800 (340 aa).

Helical transmembrane passes span 7-27 (LVLL…FTPL), 57-77 (SVIA…YGLI), 140-160 (TLLI…LADM), 193-213 (LWFG…PFFL), 225-245 (GLMF…ILPV), 260-280 (FLLI…RPYF), and 290-310 (LVLM…GFFI).

The protein belongs to the autoinducer-2 exporter (AI-2E) (TC 2.A.86) family.

Its subcellular location is the cell membrane. The sequence is that of Putative transport protein AF_1800 from Archaeoglobus fulgidus (strain ATCC 49558 / DSM 4304 / JCM 9628 / NBRC 100126 / VC-16).